A 950-amino-acid polypeptide reads, in one-letter code: Protocadherin alpha-13 (950 aa).

Residues M1 to G29 form the signal peptide. Residues Q30–N697 lie on the Extracellular side of the membrane. 6 Cadherin domains span residues S34–F133, P134–F242, Y243–V350, T351–F455, A456–L565, and M581–A678. N257 and N265 each carry an N-linked (GlcNAc...) asparagine glycan. N548 carries an N-linked (GlcNAc...) asparagine glycan. A helical membrane pass occupies residues V698 to Y718. Over T719 to Q950 the chain is Cytoplasmic. PXXP repeat units follow at residues P734–P737, P774–P777, P799–P802, P832–P835, P873–P876, and P891–P894. A 6 X 4 AA repeats of P-X-X-P region spans residues P734–P894. 2 disordered regions span residues L780–W806 and R829–Q950. Residues G787–R800 are compositionally biased toward basic and acidic residues. The span at D909–K923 shows a compositional bias: basic and acidic residues.

It is found in the cell membrane. In terms of biological role, potential calcium-dependent cell-adhesion protein. May be involved in the establishment and maintenance of specific neuronal connections in the brain. This chain is Protocadherin alpha-13 (PCDHA13), found in Homo sapiens (Human).